Consider the following 150-residue polypeptide: MSLQFNMIALLLVILILLGIFSHNSSITISAAVLLIMQQTLLAKYIPYLEKYGLSIGIVILTIGVLSPLVSGKIQLPGLSAFVSWKMFVAIAVGVFVAWLAGKGVPLMGEQPVLVTGLVIGTIIGVSFLGGIPVGPLIAAGILAVLIGKF.

4 consecutive transmembrane segments (helical) span residues 1–21 (MSLQ…LGIF), 52–72 (YGLS…LVSG), 81–101 (AFVS…AWLA), and 128–148 (FLGG…VLIG).

This sequence belongs to the UPF0756 family.

Its subcellular location is the cell membrane. In Aggregatibacter aphrophilus (strain NJ8700) (Haemophilus aphrophilus), this protein is UPF0756 membrane protein NT05HA_0561.